A 100-amino-acid polypeptide reads, in one-letter code: uncharacterized protein (100 aa).

The tract at residues 40 to 100 (GDQMARKATS…DPTKNKSGRG (61 aa)) is disordered.

This is an uncharacterized protein from Mycobacterium tuberculosis (strain ATCC 25618 / H37Rv).